We begin with the raw amino-acid sequence, 463 residues long: ATP synthase subunit beta (463 aa).

Position 152 to 159 (152 to 159 (GGAGVGKT)) interacts with ATP.

It belongs to the ATPase alpha/beta chains family. In terms of assembly, F-type ATPases have 2 components, CF(1) - the catalytic core - and CF(0) - the membrane proton channel. CF(1) has five subunits: alpha(3), beta(3), gamma(1), delta(1), epsilon(1). CF(0) has three main subunits: a(1), b(2) and c(9-12). The alpha and beta chains form an alternating ring which encloses part of the gamma chain. CF(1) is attached to CF(0) by a central stalk formed by the gamma and epsilon chains, while a peripheral stalk is formed by the delta and b chains.

The protein resides in the cell inner membrane. The catalysed reaction is ATP + H2O + 4 H(+)(in) = ADP + phosphate + 5 H(+)(out). Its function is as follows. Produces ATP from ADP in the presence of a proton gradient across the membrane. The catalytic sites are hosted primarily by the beta subunits. This is ATP synthase subunit beta from Shewanella sp. (strain ANA-3).